The chain runs to 231 residues: Large ribosomal subunit protein uL1 (231 aa).

The protein belongs to the universal ribosomal protein uL1 family. As to quaternary structure, part of the 50S ribosomal subunit.

Functionally, binds directly to 23S rRNA. The L1 stalk is quite mobile in the ribosome, and is involved in E site tRNA release. Its function is as follows. Protein L1 is also a translational repressor protein, it controls the translation of the L11 operon by binding to its mRNA. This is Large ribosomal subunit protein uL1 from Hydrogenovibrio crunogenus (strain DSM 25203 / XCL-2) (Thiomicrospira crunogena).